Consider the following 122-residue polypeptide: Ribonuclease P protein component (122 aa).

It belongs to the RnpA family. In terms of assembly, consists of a catalytic RNA component (M1 or rnpB) and a protein subunit.

It catalyses the reaction Endonucleolytic cleavage of RNA, removing 5'-extranucleotides from tRNA precursor.. In terms of biological role, RNaseP catalyzes the removal of the 5'-leader sequence from pre-tRNA to produce the mature 5'-terminus. It can also cleave other RNA substrates such as 4.5S RNA. The protein component plays an auxiliary but essential role in vivo by binding to the 5'-leader sequence and broadening the substrate specificity of the ribozyme. This is Ribonuclease P protein component from Lactobacillus gasseri (strain ATCC 33323 / DSM 20243 / BCRC 14619 / CIP 102991 / JCM 1131 / KCTC 3163 / NCIMB 11718 / NCTC 13722 / AM63).